The sequence spans 461 residues: Serine/threonine-protein kinase VHS1 (461 aa).

Residues 12 to 337 enclose the Protein kinase domain; that stretch reads YLITSQIGEG…KEVSSITSFT (326 aa). ATP-binding positions include 18-26 and Lys41; that span reads IGEGAYGLV. Residue Asp185 is the Proton acceptor of the active site. Positions 384–433 are disordered; sequence LSYTSSSEEEDGIKEGIDDDNGSRSGSFGTLDTDTGLHSSFTSTSCESDN. Residues 390–403 show a composition bias toward acidic residues; sequence SEEEDGIKEGIDDD. Polar residues predominate over residues 406–433; sequence SRSGSFGTLDTDTGLHSSFTSTSCESDN.

The protein belongs to the protein kinase superfamily. Ser/Thr protein kinase family.

The protein localises to the cytoplasm. The enzyme catalyses L-seryl-[protein] + ATP = O-phospho-L-seryl-[protein] + ADP + H(+). It carries out the reaction L-threonyl-[protein] + ATP = O-phospho-L-threonyl-[protein] + ADP + H(+). Probable serine/threonine protein kinase involved in the G1-S transition. The polypeptide is Serine/threonine-protein kinase VHS1 (VHS1) (Saccharomyces cerevisiae (strain ATCC 204508 / S288c) (Baker's yeast)).